The primary structure comprises 740 residues: Arf-GAP with coiled-coil, ANK repeat and PH domain-containing protein 1 (740 aa).

The BAR domain occupies 1–226 (MTVKLDFEEC…RKELGTQLHN (226 aa)). The segment at 1–382 (MTVKLDFEEC…RGPGQVSGYH (382 aa)) is required for formation of endosomal tubules when overexpressed with PIP5K1C. Positions 265 to 360 (GLVMEGHLFK…WVSAVQSSIA (96 aa)) constitute a PH domain. The Arf-GAP domain maps to 405 to 527 (GQVAAQVQSV…KFLTKLPEIR (123 aa)). The segment at 405 to 740 (GQVAAQVQSV…SRRSHDLHTL (336 aa)) is required for interaction with GULP1. The C4-type zinc-finger motif lies at 420–443 (CCDCREPAPEWASINLGVTLCIQC). Y485 carries the 3'-nitrotyrosine modification. The tract at residues 525-562 (EIRGRRGGRGPPRGHPPVPPKPPIRPHSGIVRSKSECP) is disordered. Residues 525 to 566 (EIRGRRGGRGPPRGHPPVPPKPPIRPHSGIVRSKSECPSDDM) form a prevents interaction with ITGB1 when S-554 is not phosphorylated region. The span at 537–549 (RGHPPVPPKPPIR) shows a compositional bias: pro residues. ANK repeat units follow at residues 606 to 635 (GNATPLIRATAANSLLACEFLLQNGANVNQ), 639 to 668 (AGRGPLHHATILGHTGLACLFLKRGADLGA), and 672 to 702 (EGRDPLTIAMETTNADIVTLLRLAKMREAEA).

In terms of assembly, banana-shaped homodimer laterally assembling into tetramers, the tetramers further pack helically onto the membrane. Interacts with GTP-bound ARF6. Interacts with third cytoplasmic loop of SLC2A4/GLUT4. Interacts with CLTC. Interacts with GULP1. Forms a complex with GDP-bound ARF6 and GULP1. Interacts with ITGB1; required for ITGB1 recycling.

The protein resides in the recycling endosome membrane. Its activity is regulated as follows. GAP activity stimulated by phosphatidylinositol 4,5-bisphosphate (PIP2) and phosphatidic acid. In terms of biological role, GTPase-activating protein (GAP) for ADP ribosylation factor 6 (ARF6) required for clathrin-dependent export of proteins from recycling endosomes to trans-Golgi network and cell surface. Required for regulated export of ITGB1 from recycling endosomes to the cell surface and ITGB1-dependent cell migration. The protein is Arf-GAP with coiled-coil, ANK repeat and PH domain-containing protein 1 (Acap1) of Mus musculus (Mouse).